Reading from the N-terminus, the 270-residue chain is 3-methyl-2-oxobutanoate hydroxymethyltransferase (270 aa).

Residues aspartate 43 and aspartate 82 each contribute to the Mg(2+) site. 3-methyl-2-oxobutanoate-binding positions include 43 to 44 (DS), aspartate 82, and lysine 110. Glutamate 112 is a Mg(2+) binding site. Glutamate 179 serves as the catalytic Proton acceptor.

Belongs to the PanB family. As to quaternary structure, homodecamer; pentamer of dimers. The cofactor is Mg(2+).

The protein resides in the cytoplasm. It carries out the reaction 3-methyl-2-oxobutanoate + (6R)-5,10-methylene-5,6,7,8-tetrahydrofolate + H2O = 2-dehydropantoate + (6S)-5,6,7,8-tetrahydrofolate. It participates in cofactor biosynthesis; (R)-pantothenate biosynthesis; (R)-pantoate from 3-methyl-2-oxobutanoate: step 1/2. Catalyzes the reversible reaction in which hydroxymethyl group from 5,10-methylenetetrahydrofolate is transferred onto alpha-ketoisovalerate to form ketopantoate. This is 3-methyl-2-oxobutanoate hydroxymethyltransferase from Psychrobacter sp. (strain PRwf-1).